The sequence spans 352 residues: Glycogen synthase kinase 3 (352 aa).

Positions 20–310 constitute a Protein kinase domain; it reads YTVERVAGQG…PLDALCHPFF (291 aa). ATP-binding positions include 26–34 and K49; that span reads AGQGTFGTV. The Proton acceptor role is filled by D152.

The protein belongs to the protein kinase superfamily. CMGC Ser/Thr protein kinase family. GSK-3 subfamily. As to quaternary structure, inhibited by cyclin kinase 2 (CDK2) inhibitors, including GW8510.

The enzyme catalyses L-seryl-[tau protein] + ATP = O-phospho-L-seryl-[tau protein] + ADP + H(+). It catalyses the reaction L-threonyl-[tau protein] + ATP = O-phospho-L-threonyl-[tau protein] + ADP + H(+). This is Glycogen synthase kinase 3 from Trypanosoma brucei brucei (strain 927/4 GUTat10.1).